A 511-amino-acid polypeptide reads, in one-letter code: ATP synthase subunit alpha (511 aa).

An ATP-binding site is contributed by 169–176 (GDRQTGKT).

The protein belongs to the ATPase alpha/beta chains family. As to quaternary structure, F-type ATPases have 2 components, CF(1) - the catalytic core - and CF(0) - the membrane proton channel. CF(1) has five subunits: alpha(3), beta(3), gamma(1), delta(1), epsilon(1). CF(0) has three main subunits: a(1), b(2) and c(9-12). The alpha and beta chains form an alternating ring which encloses part of the gamma chain. CF(1) is attached to CF(0) by a central stalk formed by the gamma and epsilon chains, while a peripheral stalk is formed by the delta and b chains.

Its subcellular location is the cell inner membrane. The enzyme catalyses ATP + H2O + 4 H(+)(in) = ADP + phosphate + 5 H(+)(out). Produces ATP from ADP in the presence of a proton gradient across the membrane. The alpha chain is a regulatory subunit. This chain is ATP synthase subunit alpha, found in Bartonella tribocorum (strain CIP 105476 / IBS 506).